We begin with the raw amino-acid sequence, 205 residues long: uncharacterized protein (205 aa).

This is an uncharacterized protein from Sinorhizobium fredii (strain NBRC 101917 / NGR234).